A 219-amino-acid chain; its full sequence is Orotate phosphoribosyltransferase (219 aa).

K26 contributes to the 5-phospho-alpha-D-ribose 1-diphosphate binding site. 34–35 (FF) is an orotate binding site. Residues 72 to 73 (YK), R98, K99, K102, H104, and 124 to 132 (DDVITAGTA) each bind 5-phospho-alpha-D-ribose 1-diphosphate. Orotate is bound by residues T128 and R156.

It belongs to the purine/pyrimidine phosphoribosyltransferase family. PyrE subfamily. In terms of assembly, homodimer. Requires Mg(2+) as cofactor.

It carries out the reaction orotidine 5'-phosphate + diphosphate = orotate + 5-phospho-alpha-D-ribose 1-diphosphate. Its pathway is pyrimidine metabolism; UMP biosynthesis via de novo pathway; UMP from orotate: step 1/2. Its function is as follows. Catalyzes the transfer of a ribosyl phosphate group from 5-phosphoribose 1-diphosphate to orotate, leading to the formation of orotidine monophosphate (OMP). The chain is Orotate phosphoribosyltransferase from Xylella fastidiosa (strain 9a5c).